Consider the following 285-residue polypeptide: Urease accessory protein UreD (285 aa).

This sequence belongs to the UreD family. As to quaternary structure, ureD, UreF and UreG form a complex that acts as a GTP-hydrolysis-dependent molecular chaperone, activating the urease apoprotein by helping to assemble the nickel containing metallocenter of UreC. The UreE protein probably delivers the nickel.

It is found in the cytoplasm. In terms of biological role, required for maturation of urease via the functional incorporation of the urease nickel metallocenter. The sequence is that of Urease accessory protein UreD from Methylobacillus flagellatus (strain ATCC 51484 / DSM 6875 / VKM B-1610 / KT).